Here is a 364-residue protein sequence, read N- to C-terminus: Lysophosphatidic acid receptor 1 (364 aa).

The Extracellular portion of the chain corresponds to 1-50 (MAAASTSSPVISQPQFTAMNEQQCFYNESIAFFYNRSGKYLATEWNTVSK). Cystine bridges form between Cys-24-Cys-190 and Cys-188-Cys-195. N-linked (GlcNAc...) asparagine glycans are attached at residues Asn-27 and Asn-35. Lys-39 is an a 1-acyl-sn-glycero-3-phosphate binding site. A helical membrane pass occupies residues 51-75 (LVMGLGITVCVFIMLANLLVMVAIY). Residues 76-83 (VNRRFHFP) lie on the Cytoplasmic side of the membrane. A helical transmembrane segment spans residues 84 to 107 (IYYLMANLAAADFFAGLAYFYLMF). Topologically, residues 108–121 (NTGPNTRRLTVSTW) are extracellular. A helical transmembrane segment spans residues 122–144 (LLRQGLIDTSLTASVANLLAIAI). 124-129 (RQGLID) provides a ligand contact to a 1-acyl-sn-glycero-3-phosphate. At 145 to 163 (ERHITVFRMQLHTRMSNRR) the chain is on the cytoplasmic side. A helical transmembrane segment spans residues 164 to 184 (VVVVIVVIWTMAIVMGAIPSV). Residues 185–204 (GWNCICDIDHCSNMAPLYSD) are Extracellular-facing. Residues 205 to 225 (SYLVFWAIFNLVTFVVMVVLY) traverse the membrane as a helical segment. Trp-210 provides a ligand contact to a 1-acyl-sn-glycero-3-phosphate. Residues 226 to 255 (AHIFGYVRQRTMRMSRHSSGPRRNRDTMMS) are Cytoplasmic-facing. Residues 256 to 280 (LLKTVVIVLGAFIVCWTPGLVLLLL) traverse the membrane as a helical segment. At 281-294 (DVCCPQCDVLAYEK) the chain is on the extracellular side. Cysteines 284 and 287 form a disulfide. A helical transmembrane segment spans residues 295 to 315 (FFLLLAEFNSAMNPIIYSYRD). Over 316-364 (KEMSATFRQILCCQRNENPNGPTEGSDRSASSLNHTILAGVHSNDHSVV) the chain is Cytoplasmic. Ser-341 is modified (phosphoserine). A Phosphothreonine modification is found at Thr-351.

The protein belongs to the G-protein coupled receptor 1 family. Interacts with RALA and GRK2. Interacts with GNAQ and GNA13. Interacts with CD14; the interaction is enhanced by exposure to bacterial lipopolysaccharide (LPS). Post-translationally, N-glycosylated. In terms of tissue distribution, detected in lung. Detected in oligodendrocytes in corpus callosum in brain cortex (at protein level). Expressed within the embryonic cerebral cortex, where it is enriched in the ventricular zone. In the adult brain, also expressed in oligodendrocytes, as well as Schwann cells of the peripheral nervous system. Expressed in many other tissues, including lung, heart, intestine, spleen, thymus, and stomach. No expression in liver. Detected in kidney and testis. Detected in embryonic fibroblasts. Detected in adult lung fibroblasts and lung endothelial cells. Detected in dorsal root ganglion and dorsal root. Detected in astrocytes. Detected in bone.

It is found in the cell surface. It localises to the cell membrane. The protein resides in the endosome. Functionally, receptor for lysophosphatidic acid (LPA). Plays a role in the reorganization of the actin cytoskeleton, cell migration, differentiation and proliferation, and thereby contributes to the responses to tissue damage and infectious agents. Activates downstream signaling cascades via the G(i)/G(o), G(12)/G(13), and G(q) families of heteromeric G proteins. Signaling inhibits adenylyl cyclase activity and decreases cellular cAMP levels. Signaling triggers an increase of cytoplasmic Ca(2+) levels. Activates RALA; this leads to the activation of phospholipase C (PLC) and the formation of inositol 1,4,5-trisphosphate. Signaling mediates activation of down-stream MAP kinases. Contributes to the regulation of cell shape. Promotes Rho-dependent reorganization of the actin cytoskeleton in neuronal cells and neurite retraction. Promotes the activation of Rho and the formation of actin stress fibers. Promotes formation of lamellipodia at the leading edge of migrating cells via activation of RAC1. Through its function as LPA receptor, plays a role in chemotaxis and cell migration, including responses to injury and wounding. Plays a role in triggering inflammation in response to bacterial lipopolysaccharide (LPS) via its interaction with CD14. Promotes cell proliferation in response to LPA. Inhibits the intracellular ciliogenesis pathway in response to LPA and through AKT1 activation. Required for normal skeleton development. May play a role in osteoblast differentiation. Required for normal brain development. Required for normal proliferation, survival and maturation of newly formed neurons in the adult dentate gyrus. Plays a role in pain perception and in the initiation of neuropathic pain. This chain is Lysophosphatidic acid receptor 1 (Lpar1), found in Mus musculus (Mouse).